The sequence spans 519 residues: O-fucosyltransferase 1 (519 aa).

Over 1–24 the chain is Cytoplasmic; the sequence is MRRLGHHRLHGKTGGVGTKGMVAK. The chain crosses the membrane as a helical; Signal-anchor for type II membrane protein span at residues 25–45; it reads LSIGVIVLLICTLSLLFSANI. At 46–519 the chain is on the lumenal side; it reads GSNREPTRPS…TNSTVTGLER (474 aa). The segment at 67–86 is disordered; the sequence is KSGGWRPSSAPRSDWPPPTK. Residue N118 is glycosylated (N-linked (GlcNAc...) asparagine). Residue 260–262 participates in substrate binding; it reads HLR. 3 N-linked (GlcNAc...) asparagine glycosylation sites follow: N327, N357, and N511. The tract at residues 497 to 519 is disordered; that stretch reads RLESIRDPDSTSQTNSTVTGLER. Residues 506–519 are compositionally biased toward polar residues; sequence STSQTNSTVTGLER.

The protein belongs to the glycosyltransferase GT106 family.

The protein localises to the golgi apparatus membrane. It functions in the pathway glycan metabolism. The protein is O-fucosyltransferase 1 of Arabidopsis thaliana (Mouse-ear cress).